Reading from the N-terminus, the 530-residue chain is UDP-glucuronosyltransferase 1A7 (530 aa).

Residues 1–25 (MARAGWTGLLPLYVCLLLTCGFAKA) form the signal peptide. N-linked (GlcNAc...) asparagine glycans are attached at residues N71, N292, and N344. The helical transmembrane segment at 488 to 504 (VIGFLLAVVLTVAFITF) threads the bilayer.

This sequence belongs to the UDP-glycosyltransferase family. As to quaternary structure, homodimer. Homooligomer. Interacts with UGT1A1, UGT1A3, UGT1A4, UGT1A6, UGT1A8, UGT1A9 and UGT1A10 to form heterodimers. Isoform 1 interacts with isoform 2/i2 suggesting that oligomerization is involved in negative regulation of transferase activity by isoform 2. Isoform 1 also interacts with respective i2 isoforms of UGT1A1, UGT1A3, UGT1A4, UGT1A6, UGT1A8, UGT1A9 and UGT1A10. Liver and gastric tissue. Isoform 1 and isoform 2 are expressed in esophagus. Neither isoform is expressed in liver, kidney, colon and small intestine.

It localises to the endoplasmic reticulum membrane. The enzyme catalyses glucuronate acceptor + UDP-alpha-D-glucuronate = acceptor beta-D-glucuronoside + UDP + H(+). It carries out the reaction 17alpha-estradiol + UDP-alpha-D-glucuronate = 17alpha-estradiol 3-O-(beta-D-glucuronate) + UDP + H(+). The catalysed reaction is prunetin + UDP-alpha-D-glucuronate = prunetin-5-O-beta-D-glucuronide + UDP. It catalyses the reaction 5-epi-5-F2t-IsoP + UDP-alpha-D-glucuronate = 5-epi-5-F2t-IsoP-glucuronide + UDP + H(+). The enzyme catalyses (E)-ferulate + UDP-alpha-D-glucuronate = (E)-ferulic acid beta-D-glucuronate ester + UDP. It carries out the reaction candesartan + UDP-alpha-D-glucuronate = candesartan O-beta-D-glucuronoside + UDP. The catalysed reaction is SN-38 + UDP-alpha-D-glucuronate = SN-38 O-beta-D-glucuronide + UDP + H(+). It catalyses the reaction mycophenolate + UDP-alpha-D-glucuronate = mycophenolate 7-O-beta-D-glucuronide + UDP + H(+). Its function is as follows. UDP-glucuronosyltransferase (UGT) that catalyzes phase II biotransformation reactions in which lipophilic substrates are conjugated with glucuronic acid to increase the metabolite's water solubility, thereby facilitating excretion into either the urine or bile. Essential for the elimination and detoxification of drugs, xenobiotics and endogenous compounds. Catalyzes the glucuronidation of endogenous estrogen hormone epiestradiol. Involved in the glucuronidation of F2-isoprostane (5-epi-5-F2t-IsoP). Involved in the glucuronidation of the phytochemical ferulic acid at the carboxylic acid group. Also catalyzes the glucuronidation of the isoflavones genistein, daidzein, glycitein, formononetin, biochanin A and prunetin, which are phytoestrogens with anticancer and cardiovascular properties. Involved in the glucuronidation of the AGTR1 angiotensin receptor antagonist caderastan, a drug which can inhibit the effect of angiotensin II. Involved in the biotransformation of 7-ethyl-10-hydroxycamptothecin (SN-38), the pharmacologically active metabolite of the anticancer drug irinotecan. Also metabolizes mycophenolate, an immunosuppressive agent. In terms of biological role, lacks UGT glucuronidation activity but acts as a negative regulator of isoform 1. The protein is UDP-glucuronosyltransferase 1A7 of Homo sapiens (Human).